A 528-amino-acid chain; its full sequence is Carboxysome shell carbonic anhydrase (528 aa).

Residues 17-47 form a disordered region; it reads PIAPNPRWQKENPTAHGSTDTGGFGYNGGNE. Cysteine 184 contributes to the Zn(2+) binding site. Aspartate 186 acts as the Proton acceptor in catalysis. Residues histidine 252 and cysteine 263 each coordinate Zn(2+).

The protein belongs to the beta-class carbonic anhydrase family. CsoSCA subfamily. In terms of assembly, homodimer. Zn(2+) is required as a cofactor.

The protein resides in the carboxysome. The catalysed reaction is hydrogencarbonate + H(+) = CO2 + H2O. Inhibited by ethoxyzolamide and dithiothreitol (in crude extracts upon expression in E.coli). Its function is as follows. Reversible hydration of carbon dioxide. This bacteria encodes at least 3 CA enzymes. Essential for chemolithotrophic carbon dioxide fixation, supplies CO(2) to RuBisCO (ribulose bisphosphate carboxylase, cbbL-cbbS) in the carboxysome. This is Carboxysome shell carbonic anhydrase from Hydrogenovibrio crunogenus (strain DSM 25203 / XCL-2) (Thiomicrospira crunogena).